A 485-amino-acid chain; its full sequence is Glutamyl-tRNA(Gln) amidotransferase subunit A (485 aa).

Active-site charge relay system residues include Lys79 and Ser154. Catalysis depends on Ser178, which acts as the Acyl-ester intermediate.

This sequence belongs to the amidase family. GatA subfamily. As to quaternary structure, heterotrimer of A, B and C subunits.

It catalyses the reaction L-glutamyl-tRNA(Gln) + L-glutamine + ATP + H2O = L-glutaminyl-tRNA(Gln) + L-glutamate + ADP + phosphate + H(+). Allows the formation of correctly charged Gln-tRNA(Gln) through the transamidation of misacylated Glu-tRNA(Gln) in organisms which lack glutaminyl-tRNA synthetase. The reaction takes place in the presence of glutamine and ATP through an activated gamma-phospho-Glu-tRNA(Gln). This is Glutamyl-tRNA(Gln) amidotransferase subunit A from Bacillus pumilus (strain SAFR-032).